Consider the following 24-residue polypeptide: Brevinin-1R (24 aa).

Cys18 and Cys24 are joined by a disulfide.

Expressed by the skin glands.

Its subcellular location is the secreted. Functionally, antimicrobial peptide. This chain is Brevinin-1R, found in Pelophylax ridibundus (Marsh frog).